A 471-amino-acid polypeptide reads, in one-letter code: Glutamate--tRNA ligase (471 aa).

The 'HIGH' region motif lies at 9–19; sequence PSPTGYLHVGG. Zn(2+)-binding residues include Cys98, Cys100, Cys125, and His127. Residues 237-241 carry the 'KMSKS' region motif; sequence KLSKR. Lys240 provides a ligand contact to ATP.

The protein belongs to the class-I aminoacyl-tRNA synthetase family. Glutamate--tRNA ligase type 1 subfamily. In terms of assembly, monomer. Zn(2+) is required as a cofactor.

The protein resides in the cytoplasm. The catalysed reaction is tRNA(Glu) + L-glutamate + ATP = L-glutamyl-tRNA(Glu) + AMP + diphosphate. Functionally, catalyzes the attachment of glutamate to tRNA(Glu) in a two-step reaction: glutamate is first activated by ATP to form Glu-AMP and then transferred to the acceptor end of tRNA(Glu). This Escherichia coli O157:H7 protein is Glutamate--tRNA ligase.